We begin with the raw amino-acid sequence, 354 residues long: MQIAVLLSGGVDSSVALYIMIQKGYKNIKCYYLKIWLEDELSYIGECPWKEDINYVEAVCKKFNVPYEIISLQDEYYKRVVTYAIEELKIGNTPSPDIFCNQRIKFGAFFDKINEHYDLIVTGHYAKIENKNDHYILKQAKDKIKDQSYFLSHLSRKQISKLHFPLGDLLKTEIRQIAQKIDLPNKNRKDSQGICFLGKIKYDEFIKYHLGELKGNIIEQETGKILGTHNGYWFFTIGQRKGIKLSHGPWFVTEKDIQNNIIYISNSINYLKQGKQQFLVHKTNWINKPLNNGDLSAKIRHGEKKIKCKIEMLKNDIIKVDLEEKDYGISPGQFCIFYQEDECLGGAKILKTLT.

Residues 6–13 (LLSGGVDS) and Leu33 each bind ATP. Cys100 serves as the catalytic Nucleophile. A disulfide bond links Cys100 and Cys195. Residue Gly123 coordinates ATP. Residues 145-147 (KDQ) are interaction with tRNA. Residue Cys195 is the Cysteine persulfide intermediate of the active site.

The protein belongs to the MnmA/TRMU family.

The protein localises to the cytoplasm. It carries out the reaction S-sulfanyl-L-cysteinyl-[protein] + uridine(34) in tRNA + AH2 + ATP = 2-thiouridine(34) in tRNA + L-cysteinyl-[protein] + A + AMP + diphosphate + H(+). Functionally, catalyzes the 2-thiolation of uridine at the wobble position (U34) of tRNA, leading to the formation of s(2)U34. This is tRNA-specific 2-thiouridylase MnmA from Borrelia turicatae (strain 91E135).